The sequence spans 760 residues: NAD(P)H-quinone oxidoreductase subunit 5, chloroplastic (760 aa).

Helical transmembrane passes span 9–29 (WIIS…LLLF), 39–59 (IWAF…TDLF), 89–109 (IDPL…LVLV), 125–145 (FVYM…SNLI), 147–167 (IYIF…FWFT), 185–205 (GDFG…SFEF), 221–241 (NEVH…GAIA), 260–280 (TPIS…FLVA), 282–302 (LLPL…IGII), 329–349 (LGYT…FHLI), 356–376 (ALLF…VGYS), 398–418 (IAFL…CFWS), 429–449 (YSPI…FYMF), 556–576 (ILFP…IGIP), 620–640 (FSVS…KPIY), and 734–754 (FYLL…SSIF).

It belongs to the complex I subunit 5 family. As to quaternary structure, NDH is composed of at least 16 different subunits, 5 of which are encoded in the nucleus.

Its subcellular location is the plastid. It is found in the chloroplast thylakoid membrane. The enzyme catalyses a plastoquinone + NADH + (n+1) H(+)(in) = a plastoquinol + NAD(+) + n H(+)(out). It carries out the reaction a plastoquinone + NADPH + (n+1) H(+)(in) = a plastoquinol + NADP(+) + n H(+)(out). Functionally, NDH shuttles electrons from NAD(P)H:plastoquinone, via FMN and iron-sulfur (Fe-S) centers, to quinones in the photosynthetic chain and possibly in a chloroplast respiratory chain. The immediate electron acceptor for the enzyme in this species is believed to be plastoquinone. Couples the redox reaction to proton translocation, and thus conserves the redox energy in a proton gradient. The chain is NAD(P)H-quinone oxidoreductase subunit 5, chloroplastic (ndhF) from Populus alba (White poplar).